A 394-amino-acid chain; its full sequence is Phosphoglycerate kinase (394 aa).

Residues 21–23, 59–62, arginine 117, and arginine 150 contribute to the substrate site; these read DLN and HLGR. ATP contacts are provided by residues lysine 201, glutamate 318, and 344–347; that span reads GGDT.

It belongs to the phosphoglycerate kinase family. In terms of assembly, monomer.

Its subcellular location is the cytoplasm. The enzyme catalyses (2R)-3-phosphoglycerate + ATP = (2R)-3-phospho-glyceroyl phosphate + ADP. It functions in the pathway carbohydrate degradation; glycolysis; pyruvate from D-glyceraldehyde 3-phosphate: step 2/5. The polypeptide is Phosphoglycerate kinase (Blochmanniella pennsylvanica (strain BPEN)).